A 60-amino-acid polypeptide reads, in one-letter code: MNAAFIAALFILGALTLDAMAYSPTCEGKPCANNTDCKGSNLCQCRPPRGDDWRNFCSEY.

An N-terminal signal peptide occupies residues methionine 1–alanine 21. Residues arginine 49–aspartate 51 carry the Cell attachment site motif.

Belongs to the ixodegrin family. Contains 3 disulfide bonds. As to expression, expressed in salivary glands.

The protein resides in the secreted. Functionally, tick salivary platelet aggregation inhibitor that plays an important part in the anti-hemostatic strategy of ticks. Inhibits platelet aggregation induced by ADP, thrombin and thromboxane A2 (TXA2). Blocks platelet adhesion to soluble collagen (most probably through the binding to alpha-2/beta-1 integrin (ITGA2/ITGB1)) and binds to purified glycoprotein IIb/IIIa (ITGA2B/ITGB3) in a dose-dependent manner. In vivo, reduces thrombus weight effectively in a rat arteriovenous shunt model and inhibits thrombosis in a carrageenan-induced mouse tail thrombosis model. In Ixodes pacificus (Western black-legged tick), this protein is Ixodegrin-Ip.